We begin with the raw amino-acid sequence, 92 residues long: Small ribosomal subunit protein bS20 (92 aa).

The protein belongs to the bacterial ribosomal protein bS20 family.

Functionally, binds directly to 16S ribosomal RNA. This is Small ribosomal subunit protein bS20 from Magnetococcus marinus (strain ATCC BAA-1437 / JCM 17883 / MC-1).